Consider the following 61-residue polypeptide: Metallothionein-1C (61 aa).

A beta region spans residues 1 to 29 (MDPNCSCSTGSSCSCAGSCTCKACRCPSC). Cys5, Cys7, Cys13, Cys15, Cys19, Cys21, Cys24, Cys26, Cys29, Cys33, Cys34, Cys36, Cys37, Cys41, Cys44, Cys48, Cys50, Cys57, Cys59, and Cys60 together coordinate a divalent metal cation. Positions 30 to 61 (KKSCCSCCPVGCAKCAQGCICKGASDKCSCCA) are alpha.

This sequence belongs to the metallothionein superfamily. Type 1 family.

Its function is as follows. Metallothioneins have a high content of cysteine residues that bind various heavy metals; these proteins are transcriptionally regulated by both heavy metals and glucocorticoids. The polypeptide is Metallothionein-1C (MT1C) (Ovis aries (Sheep)).